The following is a 339-amino-acid chain: Probable thylakoid lumen protein sll0997 (339 aa).

The signal sequence occupies residues 1–26; that stretch reads MAPYQSFHIGLLGLALASVWPLSACA.

Its subcellular location is the cellular thylakoid lumen. The polypeptide is Probable thylakoid lumen protein sll0997 (Synechocystis sp. (strain ATCC 27184 / PCC 6803 / Kazusa)).